Consider the following 426-residue polypeptide: Serine hydroxymethyltransferase (426 aa).

(6S)-5,6,7,8-tetrahydrofolate is bound by residues Leu122 and Gly126–Leu128. Position 231 is an N6-(pyridoxal phosphate)lysine (Lys231). (6S)-5,6,7,8-tetrahydrofolate-binding positions include Glu247 and Ser355–Phe357.

Belongs to the SHMT family. Homodimer. Pyridoxal 5'-phosphate serves as cofactor.

The protein localises to the cytoplasm. It carries out the reaction (6R)-5,10-methylene-5,6,7,8-tetrahydrofolate + glycine + H2O = (6S)-5,6,7,8-tetrahydrofolate + L-serine. Its pathway is one-carbon metabolism; tetrahydrofolate interconversion. It participates in amino-acid biosynthesis; glycine biosynthesis; glycine from L-serine: step 1/1. Catalyzes the reversible interconversion of serine and glycine with tetrahydrofolate (THF) serving as the one-carbon carrier. This reaction serves as the major source of one-carbon groups required for the biosynthesis of purines, thymidylate, methionine, and other important biomolecules. Also exhibits THF-independent aldolase activity toward beta-hydroxyamino acids, producing glycine and aldehydes, via a retro-aldol mechanism. The polypeptide is Serine hydroxymethyltransferase (Cyanothece sp. (strain PCC 7425 / ATCC 29141)).